A 473-amino-acid polypeptide reads, in one-letter code: Isocitrate dehydrogenase [NADP] (473 aa).

An NADP(+)-binding site is contributed by T104. Residues S113, N115, R119, R129, and R153 each coordinate D-threo-isocitrate. D362 is a binding site for Mg(2+). Residues 394–400, N407, Y446, and R450 each bind NADP(+); that span reads HGTAPKH.

Belongs to the isocitrate and isopropylmalate dehydrogenases family. As to quaternary structure, homodimer. The cofactor is Mg(2+). Mn(2+) serves as cofactor.

The catalysed reaction is D-threo-isocitrate + NADP(+) = 2-oxoglutarate + CO2 + NADPH. Inhibited by either oxaloacetate or glyoxylate. Also inhibited by the adenine nucleotides AMP, ADP and ATP and by NADPH, which inhibits the activity by 28% when it is added to the assay mixture at 0.25 mM. In terms of biological role, catalyzes the oxidative decarboxylation of isocitrate to 2-oxoglutarate and carbon dioxide with the concomitant reduction of NADP(+). The protein is Isocitrate dehydrogenase [NADP] of Nostoc sp. (strain PCC 7120 / SAG 25.82 / UTEX 2576).